The primary structure comprises 324 residues: Fe-S cluster assembly protein dre2 (324 aa).

Positions 28 to 158 are N-terminal SAM-like domain; the sequence is GSPSKRTLLL…KMDQPKSFAI (131 aa). The interval 159-217 is linker; the sequence is PLRRNGKKKDAAKTETFAPAPAPAPPVQPVTVGMINNDDDYENDDDLIDEDTLLSDEDL. C226, C237, C240, and C242 together coordinate [2Fe-2S] cluster. Residues 226–242 are fe-S binding site A; it reads CQPKPGRRRRACKDCTC. The [4Fe-4S] cluster site is built by C287, C290, C298, and C301. Short sequence motifs (cx2C motif) lie at residues 287 to 290 and 298 to 301; these read CGNC and CAGC. The segment at 287–301 is fe-S binding site B; sequence CGNCALGDAFRCAGC.

The protein belongs to the anamorsin family. Monomer. Interacts with tah18. Interacts with mia40. It depends on [2Fe-2S] cluster as a cofactor. The cofactor is [4Fe-4S] cluster.

It is found in the cytoplasm. It localises to the mitochondrion intermembrane space. Component of the cytosolic iron-sulfur (Fe-S) protein assembly (CIA) machinery required for the maturation of extramitochondrial Fe-S proteins. Part of an electron transfer chain functioning in an early step of cytosolic Fe-S biogenesis, facilitating the de novo assembly of a [4Fe-4S] cluster on the scaffold complex cfd1-nbp35. Electrons are transferred to dre2 from NADPH via the FAD- and FMN-containing protein tah18. Tah18-dre2 are also required for the assembly of the diferric tyrosyl radical cofactor of ribonucleotide reductase (RNR), probably by providing electrons for reduction during radical cofactor maturation in the catalytic small subunit rnr2. The polypeptide is Fe-S cluster assembly protein dre2 (Aspergillus niger (strain ATCC MYA-4892 / CBS 513.88 / FGSC A1513)).